We begin with the raw amino-acid sequence, 227 residues long: Probable septum site-determining protein MinC (227 aa).

The protein belongs to the MinC family. Interacts with MinD and FtsZ.

Functionally, cell division inhibitor that blocks the formation of polar Z ring septums. Rapidly oscillates between the poles of the cell to destabilize FtsZ filaments that have formed before they mature into polar Z rings. Prevents FtsZ polymerization. In Photorhabdus laumondii subsp. laumondii (strain DSM 15139 / CIP 105565 / TT01) (Photorhabdus luminescens subsp. laumondii), this protein is Probable septum site-determining protein MinC.